The following is a 401-amino-acid chain: MSIIEDARKALLKYPLCDHCLGRLFASRGLMISNEERGRSIKNVLFMESLNSSTGTYNEDTLVALAKSGHRESLLFLRRMGKVIEQQPCFICGNLFDKININDIVSKVEEEINRQGIEFNSFQVGSTVNKGVIENEVKVSTELGITSSESIKRELNRLIGKVLADKLGKRYSRLNPDVVIKVNTSDGSVSVEVMPIYIEARYRKLIRGIPQVGDSSVASVAREVVSELRPLNVVLHFAGIEGPEVRVLGLGRPMIIEATRPLRRSLPGGIITRHGVQLLNLKAAGKVQVREIKSKAGELRRVFRILVKLHGSVTDEQLRSLEDYFSNRQIRQSMGKGRRVKLIYGLKVVPVHGSILELIVNTQGGFSVRRFITGEGTEPSVSGTLGIKVTPIEIDILNIWH.

One can recognise a THUMP domain in the interval 64 to 195; sequence ALAKSGHRES…DGSVSVEVMP (132 aa).

The protein belongs to the pseudouridine synthase Pus10 family.

It catalyses the reaction uridine(54) in tRNA = pseudouridine(54) in tRNA. The enzyme catalyses uridine(55) in tRNA = pseudouridine(55) in tRNA. In terms of biological role, responsible for synthesis of pseudouridine from uracil-54 and uracil-55 in the psi GC loop of transfer RNAs. The chain is tRNA pseudouridine synthase Pus10 from Caldivirga maquilingensis (strain ATCC 700844 / DSM 13496 / JCM 10307 / IC-167).